Here is a 156-residue protein sequence, read N- to C-terminus: Ribosomal RNA large subunit methyltransferase H (156 aa).

Residues L73, G104, and 123 to 128 (LSSLTL) contribute to the S-adenosyl-L-methionine site.

The protein belongs to the RNA methyltransferase RlmH family. Homodimer.

It is found in the cytoplasm. The enzyme catalyses pseudouridine(1915) in 23S rRNA + S-adenosyl-L-methionine = N(3)-methylpseudouridine(1915) in 23S rRNA + S-adenosyl-L-homocysteine + H(+). Its function is as follows. Specifically methylates the pseudouridine at position 1915 (m3Psi1915) in 23S rRNA. The sequence is that of Ribosomal RNA large subunit methyltransferase H from Neisseria gonorrhoeae (strain ATCC 700825 / FA 1090).